An 81-amino-acid polypeptide reads, in one-letter code: Small ribosomal subunit protein uS17 (81 aa).

The protein belongs to the universal ribosomal protein uS17 family. As to quaternary structure, part of the 30S ribosomal subunit.

In terms of biological role, one of the primary rRNA binding proteins, it binds specifically to the 5'-end of 16S ribosomal RNA. The chain is Small ribosomal subunit protein uS17 from Protochlamydia amoebophila (strain UWE25).